The following is a 189-amino-acid chain: Calcium and integrin-binding family member 2 (189 aa).

EF-hand domains lie at Arg-68 to Gln-103, Pro-105 to Asn-140, and Glu-146 to Phe-181. 9 residues coordinate Ca(2+): Asp-118, Asp-120, Asp-122, Asp-129, Asp-159, Asp-161, Asp-163, Lys-165, and Glu-170.

Monomer. Homodimer.

The protein localises to the cytoplasm. Its function is as follows. Calcium- and integrin-binding protein. Plays a role in intracellular calcium homeostasis. Critical for proper photoreceptor cell maintenance and function. Required for prevention of light-dependent retinal degeneration. The sequence is that of Calcium and integrin-binding family member 2 from Drosophila melanogaster (Fruit fly).